A 440-amino-acid chain; its full sequence is Chitinase-like protein Idgf5 (440 aa).

A signal peptide spans 1-27; the sequence is MRNKMIYFNFHLFVIIFANLQIFQVQA. The region spanning 28–439 is the GH18 domain; it reads ANIFCYYDTQ…KSIHNAFKKF (412 aa). A disulfide bridge links Cys32 with Cys56. 3 N-linked (GlcNAc...) asparagine glycosylation sites follow: Asn126, Asn283, and Asn403. An intrachain disulfide couples Cys340 to Cys421.

It belongs to the glycosyl hydrolase 18 family. IDGF subfamily. Glycosylated.

Its subcellular location is the secreted. Functionally, cooperates with insulin-like peptides to stimulate the proliferation, polarization and motility of imaginal disk cells. May act by stabilizing the binding of insulin-like peptides to its receptor through a simultaneous interaction with both molecules to form a multiprotein signaling complex. The protein is Chitinase-like protein Idgf5 (Idgf5) of Glossina morsitans morsitans (Savannah tsetse fly).